A 216-amino-acid polypeptide reads, in one-letter code: Probable inactive E3 ubiquitin-protein ligase SINAT6 (216 aa).

The segment at 5 to 74 (INDLQVESRV…LLLHLRNDHN (70 aa)) adopts an SIAH-type zinc-finger fold.

Belongs to the SINA (Seven in absentia) family. Homodimer. Interacts with SINAT1, SINAT2, SINAT3, SINAT4 and SINAT5. Interacts with ATG6 and TRAF1A. Expressed in roots, rosette leaves, cauline leaves, guard cells and flowers.

It localises to the cytoplasm. Its subcellular location is the nucleus. In terms of biological role, probable inactive E3 ubiquitin-protein ligase that plays a role in regulation of autophagy. Upon starvation, involved in maintaining ATG6 homeostasis by competitively associating with ATG6, a component of the autophagosome complex. Acts as a positive regulator of drought stress response. Functions as a positive regulator of abscisic acid-mediated stomatal closure. The chain is Probable inactive E3 ubiquitin-protein ligase SINAT6 from Arabidopsis thaliana (Mouse-ear cress).